A 552-amino-acid polypeptide reads, in one-letter code: Hydroxylamine reductase (552 aa).

Positions 5, 8, 20, and 27 each coordinate [2Fe-2S] cluster. His251, Glu275, Cys319, Cys407, Cys435, Cys460, Glu494, and Lys496 together coordinate hybrid [4Fe-2O-2S] cluster. Cys407 carries the cysteine persulfide modification.

Belongs to the HCP family. It depends on [2Fe-2S] cluster as a cofactor. Hybrid [4Fe-2O-2S] cluster is required as a cofactor.

Its subcellular location is the cytoplasm. The catalysed reaction is A + NH4(+) + H2O = hydroxylamine + AH2 + H(+). Catalyzes the reduction of hydroxylamine to form NH(3) and H(2)O. The sequence is that of Hydroxylamine reductase from Shigella flexneri.